The chain runs to 762 residues: MVNFDEEVFRAYYEHKIKSFIKEELSNNLIKGNIFEFDIEKFLMHFPDACEVNDLIIERPKEIEEIILDIFKEAYVELFGEDKELEKIQIAFKNPKGCEKLIEEISAEDINKLVKFEGNILQAGKVNALLKKAVYYCNKRIKDENGGFLCKYTYTPCDGRVEIEIDDYFSEGEFIKDMLSPREVKKILENKKVWDKLVEKGKIPRCVDLKENDEVFKENLKEIKFILDEYDSIYVNIQEMEIQQPIDLMKNPEEPARSIRVFLENTPGIYAGRVNVIGRVMKREYRHNIPIYKIYIKSNYIKISESYNKIEVKDILRNEELIETLNELGRKKNIIDILSNYLISQIKGYELVKKAIFLQQIKGAFKFLPDGTPLRRDSHILLITDPGIGKSTMLRRIARLFPQNAYASVTTATGGGLTAIVTREATEIGDGWVVKPGVFVRANEGTACIDELTVDKNVMKYILEAMESQTIHVNKGGINVKLPARCAVLAACNPKRGRFDRNLTVIEQIDIPAPLLSRFDLIFPLMDKPNRKSDEEIAEHILNTHIETATKDYKILGAIDIDGITVDEKLLKYYIIYARSCAYIEENQDLYLGEFDETKLIMPYLTDKAKKMIKKYYLEMRKLGEGDNPIPITARQLEAIIRIAEMHAKARLSDKVEDVDAEVAISIIDDCLKQVAYDPETGTLDLDKIAGTPKSRRDKMDAVLNIIREIVSLRDDGLAPEEEIYEKAMAIGLSEKDVNDALEYLKKAGDIYNPRYGFWGLL.

One can recognise an MCM domain in the interval 334 to 542 (IIDILSNYLI…SDEEIAEHIL (209 aa)). An ATP-binding site is contributed by 384–391 (TDPGIGKS).

It belongs to the MCM family.

This is an uncharacterized protein from Methanocaldococcus jannaschii (strain ATCC 43067 / DSM 2661 / JAL-1 / JCM 10045 / NBRC 100440) (Methanococcus jannaschii).